The primary structure comprises 291 residues: Polyamine aminopropyltransferase (291 aa).

The PABS domain occupies 5–245 (PGPISLIEPL…YAVNYILGSL (241 aa)). Position 36 (Q36) interacts with S-methyl-5'-thioadenosine. Spermidine-binding residues include H67 and E91. S-methyl-5'-thioadenosine is bound by residues D111 and 143-144 (DG). The active-site Proton acceptor is the D164.

This sequence belongs to the spermidine/spermine synthase family. Homodimer or homotetramer.

The protein resides in the cytoplasm. It carries out the reaction S-adenosyl 3-(methylsulfanyl)propylamine + putrescine = S-methyl-5'-thioadenosine + spermidine + H(+). It functions in the pathway amine and polyamine biosynthesis; spermidine biosynthesis; spermidine from putrescine: step 1/1. Catalyzes the irreversible transfer of a propylamine group from the amino donor S-adenosylmethioninamine (decarboxy-AdoMet) to putrescine (1,4-diaminobutane) to yield spermidine. This chain is Polyamine aminopropyltransferase, found in Pyrobaculum neutrophilum (strain DSM 2338 / JCM 9278 / NBRC 100436 / V24Sta) (Thermoproteus neutrophilus).